Consider the following 555-residue polypeptide: Bifunctional epoxide hydrolase 2 (555 aa).

The interval 1–224 is phosphatase; that stretch reads MTLRAAVFDL…KVTGIQLLNT (224 aa). Mg(2+) is bound by residues aspartate 9 and aspartate 11. Lysine 43 is modified (N6-acetyllysine). Lysine 55 carries the N6-succinyllysine modification. Residue 123-124 coordinates phosphate; sequence TN. A Mg(2+)-binding site is contributed by aspartate 185. N6-acetyllysine is present on residues lysine 191 and lysine 215. Residues 235 to 555 are epoxide hydrolase; that stretch reads SDMSHGYVTV…ARNPPVVSKM (321 aa). Residues 259-531 enclose the AB hydrolase-1 domain; that stretch reads PAVCLCHGFP…CGHWTQMDKP (273 aa). Aspartate 335 acts as the Nucleophile in catalysis. Position 370 is a phosphoserine (serine 370). Tyrosine 383 provides a ligand contact to substrate. Residues lysine 421 and lysine 455 each carry the N6-succinyllysine modification. Residue tyrosine 466 is the Proton donor of the active site. Cysteine 522 carries S-(15-deoxy-Delta12,14-prostaglandin J2-9-yl)cysteine lipidation. Histidine 524 serves as the catalytic Proton acceptor. The short motif at 553 to 555 is the Microbody targeting signal element; the sequence is SKM. The residue at position 554 (lysine 554) is an N6-succinyllysine.

The protein belongs to the AB hydrolase superfamily. Epoxide hydrolase family. In terms of assembly, homodimer. Mg(2+) is required as a cofactor. In terms of processing, the N-terminus is blocked. The covalent modification of cysteine by 15-deoxy-Delta12,14-prostaglandin-J2 is autocatalytic and reversible. It may occur as an alternative to other cysteine modifications, such as S-nitrosylation and S-palmitoylation.

The protein localises to the cytoplasm. Its subcellular location is the peroxisome. The enzyme catalyses an epoxide + H2O = an ethanediol. It carries out the reaction (9S,10S)-10-hydroxy-9-(phosphooxy)octadecanoate + H2O = (9S,10S)-9,10-dihydroxyoctadecanoate + phosphate. The catalysed reaction is 12-phosphooxy-(9Z)-octadecenoate + H2O = 12-hydroxy-(9Z)-octadecenoate + phosphate. It catalyses the reaction 12-phosphooxy-(9E)-octadecenoate + H2O = 12-hydroxy-(9E)-octadecenoate + phosphate. The enzyme catalyses 12-(phosphooxy)octadecanoate + H2O = 12-hydroxyoctadecanoate + phosphate. It carries out the reaction 8,9-epoxy-(5Z,11Z,14Z)-eicosatrienoate + H2O = 8,9-dihydroxy-(5Z,11Z,14Z)-eicosatrienoate. The catalysed reaction is 11,12-epoxy-(5Z,8Z,14Z)-eicosatrienoate + H2O = 11,12-dihydroxy-(5Z,8Z,14Z)-eicosatrienoate. It catalyses the reaction 14,15-epoxy-(5Z,8Z,11Z)-eicosatrienoate + H2O = 14,15-dihydroxy-(5Z,8Z,11Z)-eicosatrienoate. The enzyme catalyses 9,10-epoxy-(12Z)-octadecenoate + H2O = 9,10-dihydroxy-(12Z)-octadecenoate. It carries out the reaction 8-hydroxy-(11S,12S)-epoxy-(5Z,9E,14Z)-eicosatrienoate + H2O = (8,11R,12S)-trihydroxy-(5Z,9E,14Z)-eicosatrienoate. The catalysed reaction is 10-hydroxy-(11S,12S)-epoxy- (5Z,8Z,14Z)-eicosatrienoate + H2O = (10,11S,12R)-trihydroxy-(5Z,8Z,14Z)-eicosatrienoate. It catalyses the reaction 1-tetradecanoyl-sn-glycerol 3-phosphate + H2O = 1-tetradecanoyl-sn-glycerol + phosphate. The enzyme catalyses 1-octadecanoyl-sn-glycero-3-phosphate + H2O = 1-octadecanoyl-sn-glycerol + phosphate. It carries out the reaction 1-(5Z,8Z,11Z,14Z-eicosatetraenoyl)-sn-glycero-3-phosphate + H2O = 1-(5Z,8Z,11Z,14Z-eicosatetraenoyl)-sn-glycerol + phosphate. The catalysed reaction is 1-hexadecanoyl-sn-glycero-3-phosphate + H2O = 1-hexadecanoyl-sn-glycerol + phosphate. It catalyses the reaction 1-(9Z-octadecenoyl)-sn-glycero-3-phosphate + H2O = 1-(9Z-octadecenoyl)-sn-glycerol + phosphate. The enzyme catalyses (8S,9R)-epoxy-(5Z,11Z,14Z)-eicosatrienoate + H2O = (8S,9S)-dihydroxy-(5Z,11Z,14Z)-eicosatrienoate. It carries out the reaction (11S,12R)-epoxy-(5Z,8Z,14Z)-eicosatrienoate + H2O = (11R,12R)-dihydroxy-(5Z,8Z,14Z)-eicosatrienoate. The catalysed reaction is (11S,12R)-epoxy-(5Z,8Z,14Z)-eicosatrienoate + H2O = (11S,12S)-dihydroxy-(5Z,8Z,14Z)-eicosatrienoate. It catalyses the reaction (14S,15R)-epoxy-(5Z,8Z,11Z)-eicosatrienoate + H2O = (14R,15R)-dihydroxy-(5Z,8Z,11Z)-eicosatrienoate. The enzyme catalyses (14S,15R)-epoxy-(5Z,8Z,11Z)-eicosatrienoate + H2O = (14S,15S)-dihydroxy-(5Z,8Z,11Z)-eicosatrienoate. It carries out the reaction (11R,12S)-epoxy-(5Z,8Z,14Z)-eicosatrienoate + H2O = (11S,12S)-dihydroxy-(5Z,8Z,14Z)-eicosatrienoate. The catalysed reaction is (11R,12S)-epoxy-(5Z,8Z,14Z)-eicosatrienoate + H2O = (11R,12R)-dihydroxy-(5Z,8Z,14Z)-eicosatrienoate. It catalyses the reaction (8S,9R)-epoxy-(5Z,11Z,14Z)-eicosatrienoate + H2O = (8R,9R)-dihydroxy-(5Z,11Z,14Z)-eicosatrienoate. The enzyme catalyses (14R,15S)-epoxy-(5Z,8Z,11Z)-eicosatrienoate + H2O = (14R,15R)-dihydroxy-(5Z,8Z,11Z)-eicosatrienoate. Its activity is regulated as follows. Inhibited by 1-(1-acetylpiperidin-4-yl)-3-(4-(trifl uoromethoxy)phenyl)urea (TPAU), 1-cyclohexyl-3-dodecylurea (CDU), 12-(3-adamantan-1-yl-ureido)-dodecanoic acid (AUDA), 1-((3S, 5S, 7S)-adamantan-1-yl)-3-(5-(2-(2-ethoxyethoxy) ethoxy)pentyl)urea (AEPU), N-adamantyl-N[']-cyclohexyl urea (ACU), 4-(((1S, 4S)-4-(3-((3S, 5S, 7S)-adamantan-1-yl) ureido)cyclohexyl)oxy)benzoic acid (c-AUCB), 4-(((1R, 4R)-4-(3-((3S, 5S, 7S)-adamantan-1-yl)ureido)cyclohexyl)oxy)benzoic acid (t-AUCB), 4-(((1R, 4R)-4-(3-(4(trifluoromethoxy)phenyl)ureido)cyclohexyl)oxy)benzoic acid (t-TAUCB) and to a lesser extent by 8-(3-((3S, 5S, 7S)-adamantan-1-yl)ureido) octanoic acid (AUOA). Phosphatase activity is inhibited by dodecyl-phosphate, phospholipids such as phospho-lysophosphatidic acids and fatty acids such as palmitic acid and lauric acid. In terms of biological role, bifunctional enzyme. The C-terminal domain has epoxide hydrolase activity and acts on epoxides (alkene oxides, oxiranes) and arene oxides. Plays a role in xenobiotic metabolism by degrading potentially toxic epoxides. Also determines steady-state levels of physiological mediators. Functionally, bifunctional enzyme. The N-terminal domain has lipid phosphatase activity, with the highest activity towards threo-9,10-phosphonooxy-hydroxy-octadecanoic acid, followed by erythro-9,10-phosphonooxy-hydroxy-octadecanoic acid, 12-phosphonooxy-octadec-9Z-enoic acid and 12-phosphonooxy-octadec-9E-enoic acid. Has phosphatase activity toward lyso-glycerophospholipids with also some lower activity toward lysolipids of sphingolipid and isoprenoid phosphates. This Homo sapiens (Human) protein is Bifunctional epoxide hydrolase 2.